Consider the following 334-residue polypeptide: Dipeptide transport ATP-binding protein DppF (334 aa).

Residues 13–262 form the ABC transporter domain; that stretch reads LQAIDLKKHY…PRHPYTQALL (250 aa). 55-62 contacts ATP; that stretch reads GESGCGKS.

The protein belongs to the ABC transporter superfamily. In terms of assembly, the complex is composed of two ATP-binding proteins (DppD and DppF), two transmembrane proteins (DppB and DppC) and a solute-binding protein (DppA). MppA can replace DppA as binding protein for heme and ALA transport.

The protein localises to the cell inner membrane. The enzyme catalyses a dipeptide(out) + ATP + H2O = a dipeptide(in) + ADP + phosphate + H(+). In terms of biological role, part of the ABC transporter DppABCDF involved in dipeptide transport. Responsible for energy coupling to the transport system. Its function is as follows. When a foreign outer membrane heme receptor is expressed in E.coli, DppABCDF can also transport heme and its precursor, 5-aminolevulinic acid (ALA), from the periplasm into the cytoplasm. The polypeptide is Dipeptide transport ATP-binding protein DppF (dppF) (Escherichia coli (strain K12)).